Here is a 591-residue protein sequence, read N- to C-terminus: Aspartate--tRNA(Asp/Asn) ligase (591 aa).

Residue E174 participates in L-aspartate binding. The interval 198-201 (QLFK) is aspartate. R220 lines the L-aspartate pocket. Residues 220–222 (RDE) and Q229 contribute to the ATP site. Residue H450 participates in L-aspartate binding. An ATP-binding site is contributed by E483. Position 490 (R490) interacts with L-aspartate. Residue 535–538 (GLDR) coordinates ATP.

It belongs to the class-II aminoacyl-tRNA synthetase family. Type 1 subfamily. In terms of assembly, homodimer.

It localises to the cytoplasm. It catalyses the reaction tRNA(Asx) + L-aspartate + ATP = L-aspartyl-tRNA(Asx) + AMP + diphosphate. Its function is as follows. Aspartyl-tRNA synthetase with relaxed tRNA specificity since it is able to aspartylate not only its cognate tRNA(Asp) but also tRNA(Asn). Reaction proceeds in two steps: L-aspartate is first activated by ATP to form Asp-AMP and then transferred to the acceptor end of tRNA(Asp/Asn). In Pseudomonas putida (strain ATCC 700007 / DSM 6899 / JCM 31910 / BCRC 17059 / LMG 24140 / F1), this protein is Aspartate--tRNA(Asp/Asn) ligase.